We begin with the raw amino-acid sequence, 199 residues long: Holliday junction branch migration complex subunit RuvA (199 aa).

Residues 1 to 63 (MIGCLIGEVF…EDAQQLYGFS (63 aa)) are domain I. The segment at 64–142 (DAQEKTIFRT…TLAQGTSSAA (79 aa)) is domain II. The segment at 143-150 (ALPQIQFV) is flexible linker. The segment at 150–199 (VSNSPVAEAEAALQSLGYKPLEAQKAVAAVKADYTESADIIRAALKSMMK) is domain III.

The protein belongs to the RuvA family. In terms of assembly, homotetramer. Forms an RuvA(8)-RuvB(12)-Holliday junction (HJ) complex. HJ DNA is sandwiched between 2 RuvA tetramers; dsDNA enters through RuvA and exits via RuvB. An RuvB hexamer assembles on each DNA strand where it exits the tetramer. Each RuvB hexamer is contacted by two RuvA subunits (via domain III) on 2 adjacent RuvB subunits; this complex drives branch migration. In the full resolvosome a probable DNA-RuvA(4)-RuvB(12)-RuvC(2) complex forms which resolves the HJ.

Its subcellular location is the cytoplasm. Its function is as follows. The RuvA-RuvB-RuvC complex processes Holliday junction (HJ) DNA during genetic recombination and DNA repair, while the RuvA-RuvB complex plays an important role in the rescue of blocked DNA replication forks via replication fork reversal (RFR). RuvA specifically binds to HJ cruciform DNA, conferring on it an open structure. The RuvB hexamer acts as an ATP-dependent pump, pulling dsDNA into and through the RuvAB complex. HJ branch migration allows RuvC to scan DNA until it finds its consensus sequence, where it cleaves and resolves the cruciform DNA. The chain is Holliday junction branch migration complex subunit RuvA from Acinetobacter baumannii (strain ACICU).